A 2038-amino-acid polypeptide reads, in one-letter code: HEAT repeat-containing protein 5A (2038 aa).

HEAT repeat units follow at residues 850 to 887 and 1082 to 1119; these read EVRR…VADD and LLRR…AAAD. Residues 1646-1668 form a disordered region; the sequence is RSAEVDDGASEKETLPEFGEGKD. Ser1647 carries the post-translational modification Phosphoserine.

This sequence belongs to the HEATR5 family.

This Mus musculus (Mouse) protein is HEAT repeat-containing protein 5A (Heatr5a).